We begin with the raw amino-acid sequence, 1021 residues long: Sodium/potassium-transporting ATPase subunit alpha-1 (1021 aa).

Residues 1 to 5 (MGKGV) constitute a propeptide that is removed on maturation. The segment covering 1 to 11 (MGKGVGRDKYE) has biased composition (basic and acidic residues). The segment at 1–36 (MGKGVGRDKYEPAAVSEHGDKKKAKKERDMDELKKE) is disordered. Residues 6 to 85 (GRDKYEPAAV…NALTPPPTTP (80 aa)) lie on the Cytoplasmic side of the membrane. The residue at position 9 (K9) is an N6-acetyllysine. Residue Y10 is modified to Phosphotyrosine. Position 16 is a phosphoserine; by PKC (S16). An N6-acetyllysine modification is found at K21. The segment covering 26 to 36 (KERDMDELKKE) has biased composition (basic and acidic residues). Phosphoserine is present on residues S38 and S45. Residues 80-82 (PPP) are phosphoinositide-3 kinase binding. The chain crosses the membrane as a helical span at residues 86 to 106 (EWVKFCRQLFGGFSMLLWIGA). At 107–129 (VLCFLAYGIQAATEEEPQNDNLY) the chain is on the extracellular side. The helical transmembrane segment at 130-150 (LGVVLSAVVIITGCFSYYQEA) threads the bilayer. At 151–286 (KSSKIMESFK…GGQTPIAAEI (136 aa)) the chain is on the cytoplasmic side. S226 bears the Phosphoserine mark. Residue Y258 is modified to Phosphotyrosine. Residues 287 to 306 (EHFIHIITGVAVFLGVSFFI) traverse the membrane as a helical segment. Residues 307–318 (LSLILEYTWLEA) lie on the Extracellular side of the membrane. Residues 319 to 336 (VIFLIGIIVANVPEGLLA) form a helical membrane-spanning segment. The Cytoplasmic portion of the chain corresponds to 337 to 770 (TVTVCLTLTA…EEGRLIFDNL (434 aa)). Catalysis depends on D374, which acts as the 4-aspartylphosphate intermediate. A phosphoserine mark is found at S450 and S482. An ATP-binding site is contributed by K485. Y540 carries the post-translational modification Phosphotyrosine. The tract at residues 594-715 (RAAVPDAVGK…QGAIVAVTGD (122 aa)) is mediates interaction with SCN7A. S666 bears the Phosphoserine mark. Mg(2+)-binding residues include D715 and D719. The helical transmembrane segment at 771 to 790 (KKSIAYTLTSNIPEITPFLI) threads the bilayer. Residues 791 to 800 (FIIANIPLPL) lie on the Extracellular side of the membrane. A helical transmembrane segment spans residues 801-821 (GTVTILCIDLGTDMVPAISLA). Topologically, residues 822–841 (YEQAESDIMKRQPRNPQTDK) are cytoplasmic. Residues 842–864 (LVNERLISMAYGQIGMIQALGGF) traverse the membrane as a helical segment. Over 865–916 (FTYFVIMAENGFLPNHLLGIRVTWDDRWINDVEDSYGQQWTYEQRKIVEFTC) the chain is Extracellular. A helical transmembrane segment spans residues 917-936 (HTAFFVSIVVVQWADLVICK). Residues 937 to 949 (TRRNSVFQQGMKN) lie on the Cytoplasmic side of the membrane. S941 bears the Phosphoserine; by PKA mark. The helical transmembrane segment at 950–968 (KILIFGLFEETALAAFLSY) threads the bilayer. The Extracellular portion of the chain corresponds to 969–983 (CPGMGVALRMYPLKP). Residues 984-1004 (TWWFCAFPYSLLIFVYDEVRK) traverse the membrane as a helical segment. Residues 1005-1021 (LIIRRRPGGWVEKETYY) lie on the Cytoplasmic side of the membrane.

This sequence belongs to the cation transport ATPase (P-type) (TC 3.A.3) family. Type IIC subfamily. As to quaternary structure, the sodium/potassium-transporting ATPase is composed of a catalytic alpha subunit, an auxiliary non-catalytic beta subunit and an additional regulatory subunit. Interacts with regulatory subunit FXYD1. Interacts with regulatory subunit FXYD3. Interacts with SIK1. Interacts with SLC35G1 and STIM1. Interacts with CLN3; this interaction regulates the sodium/potassium-transporting ATPase complex localization at the plasma membrane. Interacts with SCN7A; activates ATP1A1 P-type sodium:potassium-exchanging transporter activity which indirectly signals to nearby neurons to regulate sodium homeostasis. In terms of processing, phosphorylation on Tyr-10 modulates pumping activity. Phosphorylation of Ser-941 by PKA modulates the response of ATP1A1 to PKC. Dephosphorylation by protein phosphatase 2A (PP2A) following increases in intracellular sodium, leading to increase catalytic activity.

The protein resides in the cell membrane. The protein localises to the basolateral cell membrane. It is found in the sarcolemma. It localises to the cell projection. Its subcellular location is the axon. The protein resides in the melanosome. It carries out the reaction K(+)(out) + Na(+)(in) + ATP + H2O = K(+)(in) + Na(+)(out) + ADP + phosphate + H(+). This is the catalytic component of the active enzyme, which catalyzes the hydrolysis of ATP coupled with the exchange of sodium and potassium ions across the plasma membrane. This action creates the electrochemical gradient of sodium and potassium ions, providing the energy for active transport of various nutrients. Could also be part of an osmosensory signaling pathway that senses body-fluid sodium levels and controls salt intake behavior as well as voluntary water intake to regulate sodium homeostasis. In Bos taurus (Bovine), this protein is Sodium/potassium-transporting ATPase subunit alpha-1 (ATP1A1).